The chain runs to 209 residues: Octanoyltransferase (209 aa).

A BPL/LPL catalytic domain is found at 30–209 (DNEPEIVYLV…IQTEFNKIFK (180 aa)). Residues 69–76 (RGGKFTFH), 143–145 (AIG), and 156–158 (GIA) contribute to the substrate site. Cys174 (acyl-thioester intermediate) is an active-site residue.

Belongs to the LipB family.

It is found in the cytoplasm. The catalysed reaction is octanoyl-[ACP] + L-lysyl-[protein] = N(6)-octanoyl-L-lysyl-[protein] + holo-[ACP] + H(+). Its pathway is protein modification; protein lipoylation via endogenous pathway; protein N(6)-(lipoyl)lysine from octanoyl-[acyl-carrier-protein]: step 1/2. Catalyzes the transfer of endogenously produced octanoic acid from octanoyl-acyl-carrier-protein onto the lipoyl domains of lipoate-dependent enzymes. Lipoyl-ACP can also act as a substrate although octanoyl-ACP is likely to be the physiological substrate. In Rickettsia prowazekii (strain Madrid E), this protein is Octanoyltransferase.